We begin with the raw amino-acid sequence, 365 residues long: Peptide chain release factor 2 (365 aa).

Gln252 bears the N5-methylglutamine mark.

It belongs to the prokaryotic/mitochondrial release factor family. Methylated by PrmC. Methylation increases the termination efficiency of RF2.

Its subcellular location is the cytoplasm. Peptide chain release factor 2 directs the termination of translation in response to the peptide chain termination codons UGA and UAA. The polypeptide is Peptide chain release factor 2 (Shigella flexneri).